Consider the following 249-residue polypeptide: Cytoplasmic envelopment protein 1 (249 aa).

It belongs to the herpesviridae cytoplasmic envelopment protein 1 family.

The protein resides in the virion. It is found in the virion tegument. Its subcellular location is the host cytoplasm. It localises to the host Golgi apparatus. Plays a critical role in cytoplasmic virus egress. Participates in the final step of tegumentation and envelope acquisition within the host cytoplasm. The polypeptide is Cytoplasmic envelopment protein 1 (UL103) (Homo sapiens (Human)).